We begin with the raw amino-acid sequence, 425 residues long: UPF0761 membrane protein xcc-b100_3490 (425 aa).

6 helical membrane passes run 48-68 (VFAL…FPAF), 105-125 (FTVA…HSIE), 154-174 (GTML…LPLF), 182-202 (LAEF…IVLI), 216-236 (ALPG…GFGF), and 250-270 (ALSA…SVLL).

This sequence belongs to the UPF0761 family.

Its subcellular location is the cell inner membrane. This chain is UPF0761 membrane protein xcc-b100_3490, found in Xanthomonas campestris pv. campestris (strain B100).